We begin with the raw amino-acid sequence, 232 residues long: Early E1A protein (232 aa).

Residues 40–48 are interaction with RB1 in competition with E2F1; the sequence is PTLHDLFDV. Positions 69-84 are enriched in low complexity; the sequence is TDSSASTEADSGFSPL. The segment at 69 to 97 is disordered; that stretch reads TDSSASTEADSGFSPLSTPPVSPIPPHPT. Positions 85–97 are enriched in pro residues; it reads STPPVSPIPPHPT. The LXCXE motif, interaction with host RB1 motif lies at 107 to 111; sequence LLCLE. The segment at 146-164 is a zinc-finger region; sequence CLRCAFYQEQDDNALCGLC. Residues 175–232 form a disordered region; it reads SAGAEEEDDEVIFVSAKPGGRKRSAATPCEPDGVSKRPCVPEPEQTEPLDLSLKPRPN. A PXDLS motif, CTBP-binding motif is present at residues 222–226; the sequence is PLDLS. The short motif at 228-232 is the Nuclear localization signal element; the sequence is KPRPN.

Belongs to the adenoviridae E1A protein family. As to quaternary structure, interacts with host UBE2I; this interaction interferes with polySUMOylation. Interacts with host RB1; this interaction induces the aberrant dissociation of RB1-E2F1 complex thereby disrupting the activity of RB1 and activating E2F1-regulated genes. Interacts with host ATF7; the interaction enhances ATF7-mediated viral transactivation activity which requires the zinc binding domains of both proteins. Isoform early E1A 32 kDa protein and isoform early E1A 26 kDa protein interact (via N-terminus) with CUL1 and E3 ubiquitin ligase RBX1; these interactions inhibit RBX1-CUL1-dependent elongation reaction of ubiquitin chains and attenuate ubiquitination of SCF(FBXW7) target proteins. Interacts (via PXLXP motif) with host ZMYND11/BS69 (via MYND-type zinc finger); this interaction inhibits E1A mediated transactivation. Interacts with host EP300; this interaction stimulates the acetylation of RB1 by recruiting EP300 and RB1 into a multimeric-protein complex. Interacts with host CTBP1 and CTBP2; this interaction seems to potentiate viral replication. Interacts with host DCAF7. Interacts with host DYRK1A. Interacts with host KPNA4; this interaction allows E1A import into the host nucleus. Interacts with host EP400; this interaction stabilizes MYC. Interacts with host TBP protein; this interaction probably disrupts the TBP-TATA complex.

It localises to the host nucleus. Its function is as follows. Plays a role in viral genome replication by driving entry of quiescent cells into the cell cycle. Stimulation of progression from G1 to S phase allows the virus to efficiently use the cellular DNA replicating machinery to achieve viral genome replication. E1A protein has both transforming and trans-activating activities. Induces the disassembly of the E2F1 transcription factor from RB1 by direct competition for the same binding site on RB1, with subsequent transcriptional activation of E2F1-regulated S-phase genes and of the E2 region of the adenoviral genome. Release of E2F1 leads to the ARF-mediated inhibition of MDM2 and causes TP53/p53 to accumulate because it is not targeted for degradation by MDM2-mediated ubiquitination anymore. This increase in TP53, in turn, would arrest the cell proliferation and direct its death but this effect is counteracted by the viral protein E1B-55K. Inactivation of the ability of RB1 to arrest the cell cycle is critical for cellular transformation, uncontrolled cellular growth and proliferation induced by viral infection. Interaction with RBX1 and CUL1 inhibits ubiquitination of the proteins targeted by SCF(FBXW7) ubiquitin ligase complex, and may be linked to unregulated host cell proliferation. The tumorigenesis-restraining activity of E1A may be related to the disruption of the host CtBP-CtIP complex through the CtBP binding motif. This is Early E1A protein from Canine adenovirus serotype 2 (strain Toronto A 26-61) (CAdV-2).